Here is a 146-residue protein sequence, read N- to C-terminus: NADPH-dependent 7-cyano-7-deazaguanine reductase (146 aa).

The active-site Thioimide intermediate is the Cys48. Asp55 serves as the catalytic Proton donor. Residues 70–72 and 89–90 contribute to the substrate site; these read VES and HE.

The protein belongs to the GTP cyclohydrolase I family. QueF type 1 subfamily.

The protein localises to the cytoplasm. It catalyses the reaction 7-aminomethyl-7-carbaguanine + 2 NADP(+) = 7-cyano-7-deazaguanine + 2 NADPH + 3 H(+). It participates in tRNA modification; tRNA-queuosine biosynthesis. Functionally, catalyzes the NADPH-dependent reduction of 7-cyano-7-deazaguanine (preQ0) to 7-aminomethyl-7-deazaguanine (preQ1). This chain is NADPH-dependent 7-cyano-7-deazaguanine reductase, found in Helicobacter pylori (strain Shi470).